A 264-amino-acid chain; its full sequence is Diphthine synthase (264 aa).

Residues Leu9, Asp84, Val87, 112–113, Leu164, Ala207, and His232 contribute to the S-adenosyl-L-methionine site; that span reads SI.

It belongs to the diphthine synthase family. As to quaternary structure, homodimer.

The enzyme catalyses 2-[(3S)-amino-3-carboxypropyl]-L-histidyl-[translation elongation factor 2] + 3 S-adenosyl-L-methionine = diphthine-[translation elongation factor 2] + 3 S-adenosyl-L-homocysteine + 3 H(+). Its pathway is protein modification; peptidyl-diphthamide biosynthesis. Functionally, S-adenosyl-L-methionine-dependent methyltransferase that catalyzes the trimethylation of the amino group of the modified target histidine residue in translation elongation factor 2 (EF-2), to form an intermediate called diphthine. The three successive methylation reactions represent the second step of diphthamide biosynthesis. This is Diphthine synthase from Methanothermobacter thermautotrophicus (strain ATCC 29096 / DSM 1053 / JCM 10044 / NBRC 100330 / Delta H) (Methanobacterium thermoautotrophicum).